The sequence spans 324 residues: tRNA N6-adenosine threonylcarbamoyltransferase (324 aa).

Residues His-107, His-111, and Tyr-127 each contribute to the Fe cation site. Substrate-binding positions include 127 to 131 (YVSGG), Asp-159, Gly-172, Glu-176, and Asn-257. Position 285 (Asp-285) interacts with Fe cation.

Belongs to the KAE1 / TsaD family. Monomer. Component of the KEOPS complex that consists of Kae1, Bud32, Cgi121 and Pcc1; the whole complex dimerizes. Fe(2+) is required as a cofactor.

It localises to the cytoplasm. It carries out the reaction L-threonylcarbamoyladenylate + adenosine(37) in tRNA = N(6)-L-threonylcarbamoyladenosine(37) in tRNA + AMP + H(+). Required for the formation of a threonylcarbamoyl group on adenosine at position 37 (t(6)A37) in tRNAs that read codons beginning with adenine. Is a component of the KEOPS complex that is probably involved in the transfer of the threonylcarbamoyl moiety of threonylcarbamoyl-AMP (TC-AMP) to the N6 group of A37. Kae1 likely plays a direct catalytic role in this reaction, but requires other protein(s) of the complex to fulfill this activity. The polypeptide is tRNA N6-adenosine threonylcarbamoyltransferase (Thermococcus sibiricus (strain DSM 12597 / MM 739)).